We begin with the raw amino-acid sequence, 321 residues long: Pectinesterase (321 aa).

The residue at position 1 (T1) is an N-acetylthreonine. An N-linked (GlcNAc...) (complex) asparagine glycan is attached at N75. Substrate contacts are provided by T84 and Q114. D137 serves as the catalytic Proton donor. A disulfide bond links C151 and C171. Residue D158 is the Nucleophile of the active site. The substrate site is built by R226 and W228. Residues N275, N290, and N319 are each glycosylated (N-linked (GlcNAc...) (complex) asparagine).

It belongs to the pectinesterase family. Post-translationally, the N-glycans attached at Asn-75, Asn-275, Asn-290 and Asn-319 are complex oligosaccharides containing xylose, fucose, hexose and N-acetylglucosamine.

The catalysed reaction is [(1-&gt;4)-alpha-D-galacturonosyl methyl ester](n) + n H2O = [(1-&gt;4)-alpha-D-galacturonosyl](n) + n methanol + n H(+). It functions in the pathway glycan metabolism; pectin degradation; 2-dehydro-3-deoxy-D-gluconate from pectin: step 1/5. Inhibited by PMEI. The sequence is that of Pectinesterase from Actinidia deliciosa (Kiwi).